A 275-amino-acid chain; its full sequence is MANYTAADVKKLRELTGSGMLDCKKALEESAGDFDKAVEILRVKGAKDVGKRAERNATEGLVAVSGNTMVEVNSETDFVAKNSDFKEFAAKVADAAAAAKANSQEELAAVDVDGQTADAALQEFSAKIGEKLELRRAVTLEGDKTAVYLHQRSADLPPAVGVLVAFTGEGEAAEAAARQAAMQIAALKASYLTREDVPAEIIEKERSIAEQITREEGKPEQAIPKIVEGRLNGFYKENVLLEQSSVADSKKTVKALLDEAGVTVTSFARFEVGQA.

The interval T76–V79 is involved in Mg(2+) ion dislocation from EF-Tu.

The protein belongs to the EF-Ts family.

It localises to the cytoplasm. Its function is as follows. Associates with the EF-Tu.GDP complex and induces the exchange of GDP to GTP. It remains bound to the aminoacyl-tRNA.EF-Tu.GTP complex up to the GTP hydrolysis stage on the ribosome. This Corynebacterium glutamicum (strain ATCC 13032 / DSM 20300 / JCM 1318 / BCRC 11384 / CCUG 27702 / LMG 3730 / NBRC 12168 / NCIMB 10025 / NRRL B-2784 / 534) protein is Elongation factor Ts.